A 496-amino-acid chain; its full sequence is Maintenance of mitochondrial morphology protein 1 (496 aa).

Residues 1–22 lie on the Lumenal side of the membrane; sequence MSSQLNDPTPIPAQSSLSFTQG. The chain crosses the membrane as a helical span at residues 23 to 43; the sequence is FLLGQLSVVLLIAAFIKFFIF. At 44 to 496 the chain is on the cytoplasmic side; that stretch reads GEAPPPPSRG…SLPGGGVTTT (453 aa). Disordered stretches follow at residues 50–96, 276–331, 395–433, and 449–496; these read PSRG…VPSS, PLDT…KSNV, GRTG…SREP, and DLAS…VTTT. Residues 54-64 show a composition bias toward basic residues; that stretch reads LSHRSATHRRS. Positions 65-74 are enriched in polar residues; that stretch reads NSIYSSTQHD. The segment covering 75–84 has biased composition (basic and acidic residues); sequence GNTRTLREKP. Over residues 85–96 the composition is skewed to polar residues; the sequence is SNSNVLRPVPSS. Positions 131-388 constitute an SMP-LTD domain; sequence QPESLDWFNV…EPRVQVVGLP (258 aa). The span at 276-287 shows a compositional bias: pro residues; that stretch reads PLDTPSHSPSPP. The segment covering 407–418 has biased composition (polar residues); it reads TGSNAPRSSTAA. Basic and acidic residues-rich tracts occupy residues 424-433 and 462-474; these read AHHEDSSREP and GDLR…REES.

Belongs to the MMM1 family. Homodimer. Component of the ER-mitochondria encounter structure (ERMES) or MDM complex, composed of mmm1, mdm10, mdm12 and mdm34. A mmm1 homodimer associates with one molecule of mdm12 on each side in a pairwise head-to-tail manner, and the SMP-LTD domains of mmm1 and mdm12 generate a continuous hydrophobic tunnel for phospholipid trafficking.

The protein resides in the endoplasmic reticulum membrane. Functionally, component of the ERMES/MDM complex, which serves as a molecular tether to connect the endoplasmic reticulum (ER) and mitochondria. Components of this complex are involved in the control of mitochondrial shape and protein biogenesis, and function in nonvesicular lipid trafficking between the ER and mitochondria. The mdm12-mmm1 subcomplex functions in the major beta-barrel assembly pathway that is responsible for biogenesis of all outer membrane beta-barrel proteins, and acts in a late step after the SAM complex. The mdm10-mdm12-mmm1 subcomplex further acts in the TOM40-specific pathway after the action of the mdm12-mmm1 complex. Essential for establishing and maintaining the structure of mitochondria and maintenance of mtDNA nucleoids. The chain is Maintenance of mitochondrial morphology protein 1 from Neosartorya fischeri (strain ATCC 1020 / DSM 3700 / CBS 544.65 / FGSC A1164 / JCM 1740 / NRRL 181 / WB 181) (Aspergillus fischerianus).